Reading from the N-terminus, the 133-residue chain is Putative pre-16S rRNA nuclease (133 aa).

This sequence belongs to the YqgF nuclease family.

The protein localises to the cytoplasm. In terms of biological role, could be a nuclease involved in processing of the 5'-end of pre-16S rRNA. The chain is Putative pre-16S rRNA nuclease from Bordetella bronchiseptica (strain ATCC BAA-588 / NCTC 13252 / RB50) (Alcaligenes bronchisepticus).